Reading from the N-terminus, the 91-residue chain is Large ribosomal subunit protein bL27 (91 aa).

Residues 1–22 are disordered; it reads MAHKKGQGSSRNGRDSNPQYRG. Residues 7–19 show a composition bias toward polar residues; that stretch reads QGSSRNGRDSNPQ.

It belongs to the bacterial ribosomal protein bL27 family.

This chain is Large ribosomal subunit protein bL27, found in Myxococcus xanthus (strain DK1622).